A 550-amino-acid chain; its full sequence is Proteasome-associated ATPase (550 aa).

Residues 9–48 (EELARRVASLSAQNERLAQILVEARSKIVGLQQQIDDLAQ) are a coiled coil. 233-238 (GCGKTL) contributes to the ATP binding site. The interval 528 to 550 (KGEGKNPTPAKAIETPHNTGPYL) is disordered. The segment at 549 to 550 (YL) is docks into pockets in the proteasome alpha-ring.

This sequence belongs to the AAA ATPase family. As to quaternary structure, homohexamer. Assembles into a hexameric ring structure that caps the 20S proteasome core. Strongly interacts with the prokaryotic ubiquitin-like protein Pup through a hydrophobic interface; the interacting region of ARC lies in its N-terminal coiled-coil domain. There is one Pup binding site per ARC hexamer ring. Upon ATP-binding, the C-terminus of ARC interacts with the alpha-rings of the proteasome core, possibly by binding to the intersubunit pockets.

It participates in protein degradation; proteasomal Pup-dependent pathway. Its function is as follows. ATPase which is responsible for recognizing, binding, unfolding and translocation of pupylated proteins into the bacterial 20S proteasome core particle. May be essential for opening the gate of the 20S proteasome via an interaction with its C-terminus, thereby allowing substrate entry and access to the site of proteolysis. Thus, the C-termini of the proteasomal ATPase may function like a 'key in a lock' to induce gate opening and therefore regulate proteolysis. The chain is Proteasome-associated ATPase from Jonesia denitrificans (strain ATCC 14870 / DSM 20603 / BCRC 15368 / CIP 55.134 / JCM 11481 / NBRC 15587 / NCTC 10816 / Prevot 55134) (Listeria denitrificans).